The chain runs to 293 residues: DegV domain-containing protein MG326 homolog (293 aa).

The DegV domain maps to 3–289 (TAIITDSTAS…IDAFSISLLL (287 aa)). Hexadecanoate-binding residues include threonine 62 and serine 94.

Its function is as follows. May bind long-chain fatty acids, such as palmitate, and may play a role in lipid transport or fatty acid metabolism. The chain is DegV domain-containing protein MG326 homolog from Mycoplasma pneumoniae (strain ATCC 29342 / M129 / Subtype 1) (Mycoplasmoides pneumoniae).